The primary structure comprises 94 residues: Em protein CS41 (94 aa).

Composition is skewed to basic and acidic residues over residues 1 to 16 (MASG…DSLA), 33 to 53 (EAQE…KEQM), and 74 to 94 (GGER…KTKS). The tract at residues 1–94 (MASGQEKGRS…IDESKFKTKS (94 aa)) is disordered.

It belongs to the small hydrophilic plant seed protein family.

Its function is as follows. It is thought to provide protection for the cytoplasm during the desiccation stage of embryo development. The sequence is that of Em protein CS41 (EM) from Triticum aestivum (Wheat).